The primary structure comprises 122 residues: Cytochrome b-c1 complex subunit 7-2, mitochondrial (122 aa).

Belongs to the UQCRB/QCR7 family. As to quaternary structure, component of the ubiquinol-cytochrome c oxidoreductase (cytochrome b-c1 complex, complex III, CIII), a multisubunit enzyme composed of 10 subunits. The complex is composed of 3 respiratory subunits cytochrome b (MT-CYB), cytochrome c1 (CYC1-1 or CYC1-2) and Rieske protein (UCR1-1 or UCR1-2), 2 core protein subunits MPPalpha1 (or MPPalpha2) and MPPB, and 5 low-molecular weight protein subunits QCR7-1 (or QCR7-2), UCRQ-1 (or UCRQ-2), QCR9, UCRY and probably QCR6-1 (or QCR6-2). The complex exists as an obligatory dimer and forms supercomplexes (SCs) in the inner mitochondrial membrane with NADH-ubiquinone oxidoreductase (complex I, CI), resulting in different assemblies (supercomplexes SCI(1)III(2) and SCI(2)III(4)).

The protein resides in the mitochondrion inner membrane. Its function is as follows. Component of the ubiquinol-cytochrome c oxidoreductase, a multisubunit transmembrane complex that is part of the mitochondrial electron transport chain which drives oxidative phosphorylation. The respiratory chain contains 3 multisubunit complexes succinate dehydrogenase (complex II, CII), ubiquinol-cytochrome c oxidoreductase (cytochrome b-c1 complex, complex III, CIII) and cytochrome c oxidase (complex IV, CIV), that cooperate to transfer electrons derived from NADH and succinate to molecular oxygen, creating an electrochemical gradient over the inner membrane that drives transmembrane transport and the ATP synthase. The cytochrome b-c1 complex catalyzes electron transfer from ubiquinol to cytochrome c, linking this redox reaction to translocation of protons across the mitochondrial inner membrane, with protons being carried across the membrane as hydrogens on the quinol. In the process called Q cycle, 2 protons are consumed from the matrix, 4 protons are released into the intermembrane space and 2 electrons are passed to cytochrome c. The chain is Cytochrome b-c1 complex subunit 7-2, mitochondrial (QCR7-2) from Arabidopsis thaliana (Mouse-ear cress).